The primary structure comprises 263 residues: 1-(5-phosphoribosyl)-5-[(5-phosphoribosylamino)methylideneamino] imidazole-4-carboxamide isomerase (263 aa).

It belongs to the HisA/HisF family.

The protein resides in the cytoplasm. It catalyses the reaction 1-(5-phospho-beta-D-ribosyl)-5-[(5-phospho-beta-D-ribosylamino)methylideneamino]imidazole-4-carboxamide = 5-[(5-phospho-1-deoxy-D-ribulos-1-ylimino)methylamino]-1-(5-phospho-beta-D-ribosyl)imidazole-4-carboxamide. Its pathway is amino-acid biosynthesis; L-histidine biosynthesis; L-histidine from 5-phospho-alpha-D-ribose 1-diphosphate: step 4/9. In Eremothecium gossypii (strain ATCC 10895 / CBS 109.51 / FGSC 9923 / NRRL Y-1056) (Yeast), this protein is 1-(5-phosphoribosyl)-5-[(5-phosphoribosylamino)methylideneamino] imidazole-4-carboxamide isomerase (HIS6).